Here is a 94-residue protein sequence, read N- to C-terminus: uncharacterized protein (94 aa).

The protein belongs to the phD/YefM antitoxin family.

This is an uncharacterized protein from Synechocystis sp. (strain ATCC 27184 / PCC 6803 / Kazusa).